Here is a 552-residue protein sequence, read N- to C-terminus: Pyrophosphate--fructose 6-phosphate 1-phosphotransferase subunit beta (552 aa).

Gly90 provides a ligand contact to diphosphate. A Mg(2+)-binding site is contributed by Asp184. Residues 212 to 214, 251 to 252, 259 to 261, Glu320, and 425 to 428 contribute to the substrate site; these read TID, KY, MGR, and YEGR. The Proton acceptor role is filled by Asp214.

The protein belongs to the phosphofructokinase type A (PFKA) family. PPi-dependent PFK group II subfamily. Clade 'Long' sub-subfamily. Tetramer of two alpha (regulatory) and two beta (catalytic) chains. Mg(2+) is required as a cofactor.

It is found in the cytoplasm. The enzyme catalyses beta-D-fructose 6-phosphate + diphosphate = beta-D-fructose 1,6-bisphosphate + phosphate + H(+). It functions in the pathway carbohydrate degradation; glycolysis; D-glyceraldehyde 3-phosphate and glycerone phosphate from D-glucose: step 3/4. With respect to regulation, allosterically activated by fructose 2,6-bisphosphate. Its function is as follows. Catalytic subunit of pyrophosphate--fructose 6-phosphate 1-phosphotransferase. Catalyzes the phosphorylation of D-fructose 6-phosphate, the first committing step of glycolysis. Uses inorganic phosphate (PPi) as phosphoryl donor instead of ATP like common ATP-dependent phosphofructokinases (ATP-PFKs), which renders the reaction reversible, and can thus function both in glycolysis and gluconeogenesis. This chain is Pyrophosphate--fructose 6-phosphate 1-phosphotransferase subunit beta, found in Ricinus communis (Castor bean).